Reading from the N-terminus, the 539-residue chain is Probable methionine--tRNA ligase, mitochondrial (539 aa).

The short motif at 28-38 (FYVNAAPHLGH) is the 'HIGH' region element. Residues 326–330 (KMSKS) carry the 'KMSKS' region motif. Lysine 329 is an ATP binding site.

Belongs to the class-I aminoacyl-tRNA synthetase family.

The protein resides in the mitochondrion matrix. It carries out the reaction tRNA(Met) + L-methionine + ATP = L-methionyl-tRNA(Met) + AMP + diphosphate. The sequence is that of Probable methionine--tRNA ligase, mitochondrial from Schizosaccharomyces pombe (strain 972 / ATCC 24843) (Fission yeast).